We begin with the raw amino-acid sequence, 94 residues long: MAKEELIQFEGLVTEILPDARYRVQLDAGHEIVAYTAGKMKKNRIKTLAGDRVTIEMSPYDLEKGRLIFRHKDERPGGTGAPRGAPPRGQFRRR.

The region spanning 1-72 is the S1-like domain; that stretch reads MAKEELIQFE…EKGRLIFRHK (72 aa). The tract at residues 71 to 94 is disordered; the sequence is HKDERPGGTGAPRGAPPRGQFRRR. A compositionally biased stretch (low complexity) spans 82–94; the sequence is PRGAPPRGQFRRR.

Belongs to the IF-1 family. As to quaternary structure, component of the 30S ribosomal translation pre-initiation complex which assembles on the 30S ribosome in the order IF-2 and IF-3, IF-1 and N-formylmethionyl-tRNA(fMet); mRNA recruitment can occur at any time during PIC assembly.

It is found in the cytoplasm. Functionally, one of the essential components for the initiation of protein synthesis. Stabilizes the binding of IF-2 and IF-3 on the 30S subunit to which N-formylmethionyl-tRNA(fMet) subsequently binds. Helps modulate mRNA selection, yielding the 30S pre-initiation complex (PIC). Upon addition of the 50S ribosomal subunit IF-1, IF-2 and IF-3 are released leaving the mature 70S translation initiation complex. The chain is Translation initiation factor IF-1 from Rhodopseudomonas palustris (strain BisB5).